The sequence spans 499 residues: Endoglucanase 3 (499 aa).

The signal sequence occupies residues 1–19 (MALLRCLFLLAVLLPHRNA). The active-site Nucleophile is the Asp88. Active-site residues include His416, Asp467, and Glu476.

This sequence belongs to the glycosyl hydrolase 9 (cellulase E) family. As to expression, expressed in flowers.

Its subcellular location is the secreted. The catalysed reaction is Endohydrolysis of (1-&gt;4)-beta-D-glucosidic linkages in cellulose, lichenin and cereal beta-D-glucans.. The polypeptide is Endoglucanase 3 (GLU8) (Oryza sativa subsp. japonica (Rice)).